A 770-amino-acid chain; its full sequence is Amyloid-beta precursor protein (770 aa).

The first 17 residues, 1 to 17, serve as a signal peptide directing secretion; that stretch reads MLPSLALLLLAAWTVRA. The Extracellular segment spans residues 18–701; that stretch reads LEVPTDGNAG…AEDVGSNKGA (684 aa). Residues 28 to 123 form a GFLD subdomain region; the sequence is LLAEPQIAMF…PYRCLVGEFV (96 aa). Residues 28 to 189 form the E1 domain; it reads LLAEPQIAMF…RGVEFVCCPL (162 aa). 6 disulfide bridges follow: Cys-38–Cys-62, Cys-73–Cys-117, Cys-98–Cys-105, Cys-133–Cys-187, Cys-144–Cys-174, and Cys-158–Cys-186. 96-110 serves as a coordination point for heparin; it reads NWCKRGRKQCKTHTH. The segment at 131 to 189 is cuBD subdomain; the sequence is DKCKFLHQERMDVCETHLHWHTVAKETCSEKSTNLHDYGMLLPCGIDKFRGVEFVCCPL. The tract at residues 135 to 155 is copper-binding; the sequence is FLHQERMDVCETHLHWHTVAK. Cu(2+) is bound by residues His-147, His-151, and Tyr-168. The tract at residues 181–188 is zinc-binding; the sequence is GVEFVCCP. Glu-183, Cys-186, and Cys-187 together coordinate Zn(2+). The segment covering 196–207 has biased composition (acidic residues); the sequence is IDSADAEEDDSD. The interval 196-283 is disordered; the sequence is IDSADAEEDD…TTTTTTTESV (88 aa). Ser-198 carries the phosphoserine; by CK2 modification. Ser-206 is modified (phosphoserine; by CK1). Sulfotyrosine occurs at positions 217 and 262. Over residues 228 to 264 the composition is skewed to acidic residues; it reads VAEEEEVADVEEEEAEDDEDVEDGDEVEEEAEEPYEE. Low complexity predominate over residues 268–281; that stretch reads RTTSIATTTTTTTE. 3 disulfide bridges follow: Cys-291–Cys-341, Cys-300–Cys-324, and Cys-316–Cys-337. The 51-residue stretch at 291–341 folds into the BPTI/Kunitz inhibitor domain; the sequence is CSEQAETGPCRAMISRWYFDVTEGKCAPFFYGGCGGNRNNFDTEEYCMAVC. Tyr-336 carries the post-translational modification Sulfotyrosine. The OX-2 signature appears at 344-365; the sequence is VSSQSLLKTTSEPLPQDPVKLP. The E2 domain occupies 374-565; it reads AVDKYLETPG…EEIQDEVDEL (192 aa). Residues 391–423 are heparin-binding; sequence FQKAKERLEAKHRERMSQVMREWEEAERQAKNL. Ser-441 carries the post-translational modification Phosphoserine. Residues 491-522 form a heparin-binding region; the sequence is FNMLKKYVRAEQKDRQHTLKHFEHVRMVDPKK. Tyr-497 is modified (phosphotyrosine). The collagen-binding stretch occupies residues 523–540; sequence AAQIRSQVMTHLRVIYER. N-linked (GlcNAc...) asparagine glycans are attached at residues Asn-542 and Asn-571. O-linked (Xyl...) (chondroitin sulfate) serine; in L-APP isoforms glycosylation occurs at Ser-656. 2 residues coordinate Cu(2+): His-677 and His-685. The Zn(2+) site is built by His-677 and His-685. The tract at residues 695 to 722 is interaction with PSEN1; that stretch reads VGSNKGAIIGLMVGGVVIATVIVITLVM. Residues 702 to 722 traverse the membrane as a helical segment; it reads IIGLMVGGVVIATVIVITLVM. The Cytoplasmic segment spans residues 723–770; that stretch reads LKKKQYTSIHHGVVEVDAAVTPEERHLSKMQQNGYENPTYKFFEQMQN. Residues 724–734 carry the Basolateral sorting signal motif; the sequence is KKKQYTSIHHG. The residue at position 729 (Thr-729) is a Phosphothreonine. A Phosphoserine; by APP-kinase I modification is found at Ser-730. The tract at residues 732–751 is interaction with G(o)-alpha; the sequence is HHGVVEVDAAVTPEERHLSK. Phosphothreonine; by CDK5 and MAPK10 is present on Thr-743. The required for the interaction with KIF5B and for anterograde transport in axons stretch occupies residues 756-770; the sequence is GYENPTYKFFEQMQN. Phosphotyrosine; by ABL1 is present on Tyr-757. The short motif at 757–762 is the YENPXY motif; contains endocytosis signal element; the sequence is YENPTY. Lys-763 participates in a covalent cross-link: Glycyl lysine isopeptide (Lys-Gly) (interchain with G-Cter in ubiquitin).

The protein belongs to the APP family. As to quaternary structure, binds, via its C-terminus, to the PID domain of several cytoplasmic proteins, including APBB family members, the APBA family, MAPK8IP1, SHC1 and NUMB and DAB1. Binding to DAB1 inhibits its serine phosphorylation. Interacts (via NPXY motif) with DAB2 (via PID domain); the interaction is impaired by tyrosine phosphorylation of the NPXY motif. Also interacts with GPCR-like protein BPP, APPBP1, IB1, KNS2 (via its TPR domains), APPBP2 (via BaSS) and DDB1. In vitro, it binds MAPT via the MT-binding domains. Associates with microtubules in the presence of ATP and in a kinesin-dependent manner. Interacts, through a C-terminal domain, with GNAO1. Amyloid-beta protein 42 binds CHRNA7 in hippocampal neurons. Amyloid-beta associates with HADH2. Interacts with CPEB1, ANKS1B and AGER. Interacts with ITM2B. Interacts with ITM2C. Interacts with IDE. Can form homodimers; dimerization is enhanced in the presence of Cu(2+) ions. Can form homodimers; this is promoted by heparin binding. Amyloid-beta protein 40 interacts with S100A9. CTF-alpha product of APP interacts with GSAP. Isoform APP695 interacts with SORL1 (via N-terminal ectodomain); this interaction retains APP in the trans-Golgi network and reduces processing into soluble APP-alpha and amyloid-beta peptides. The C99 fragment also interacts with SORL1. Isoform APP751 interacts with SORL1. Isoform APP770 interacts with SORL1. Interacts with PLD3. Interacts with VDAC1. Interacts with NSG1; could regulate APP processing. Amyloid-beta protein 42 interacts with FPR2. Interacts with SYT7. Interacts (via transmembrane region) with PSEN1; the interaction is direct. Interacts with LRRK2. Interacts (via cytoplasmic domain) with KIF5B. Interacts (via C-terminus) with APBB2/FE65L1 (via C-terminus). Interacts (via intracellular domain) with APBB3. In terms of processing, proteolytically processed under normal cellular conditions. Cleavage either by alpha-secretase, beta-secretase or theta-secretase leads to generation and extracellular release of soluble APP peptides, S-APP-alpha and S-APP-beta, and the retention of corresponding membrane-anchored C-terminal fragments, C80, C83 and C99. Subsequent processing of C80 and C83 by gamma-secretase yields P3 peptides. This is the major secretory pathway and is non-amyloidogenic. Alternatively, presenilin/nicastrin-mediated gamma-secretase processing of C99 releases the amyloid-beta proteins, amyloid-beta protein 40 and amyloid-beta protein 42, major components of amyloid plaques, and the cytotoxic C-terminal fragments, gamma-CTF(50), gamma-CTF(57) and gamma-CTF(59). PSEN1 cleavage is more efficient with C83 than with C99 as substrate (in vitro). Amyloid-beta protein 40 and Amyloid-beta protein 42 are cleaved by ACE. Many other minor amyloid-beta peptides, amyloid-beta 1-X peptides, are found in cerebral spinal fluid (CSF) including the amyloid-beta X-15 peptides, produced from the cleavage by alpha-secretase. Proteolytically cleaved by caspases during neuronal apoptosis. Cleavage at Asp-739 by either caspase-3, -8 or -9 results in the production of the neurotoxic C31 peptide and the increased production of amyloid-beta peptides. Post-translationally, N-glycosylated. In terms of processing, O-glycosylated. O-linkage of chondroitin sulfate to the L-APP isoforms produces the APP proteoglycan core proteins, the appicans. The chondroitin sulfate chain of appicans contains 4-O-sulfated galactose in the linkage region and chondroitin sulfate E in the repeated disaccharide region. Phosphorylation in the C-terminal on tyrosine, threonine and serine residues is neuron-specific. Phosphorylation can affect APP processing, neuronal differentiation and interaction with other proteins. Phosphorylated on Thr-743 in neuronal cells by Cdc5 kinase and Mapk10, in dividing cells by Cdc2 kinase in a cell-cycle dependent manner with maximal levels at the G2/M phase and, in vitro, by GSK-3-beta. The Thr-743 phosphorylated form causes a conformational change which reduces binding of Fe65 family members. In dopaminergic (DA) neurons, phosphorylation on Thr-743 by LRKK2 promotes the production and the nuclear translocation of the APP intracellular domain (AICD) which induces DA neuron apoptosis. Phosphorylation on Tyr-757 is required for SHC binding. Phosphorylated in the extracellular domain by casein kinases on both soluble and membrane-bound APP. This phosphorylation is inhibited by heparin. Post-translationally, extracellular binding and reduction of copper, results in a corresponding oxidation of Cys-144 and Cys-158, and the formation of a disulfide bond. In terms of processing, trophic-factor deprivation triggers the cleavage of surface APP by beta-secretase to release sAPP-beta which is further cleaved to release an N-terminal fragment of APP (N-APP). Amyloid-beta peptides are degraded by IDE. Post-translationally, sulfated on tyrosine residues. Expressed in the brain. In the brain, non-L-APP isoforms are expressed in neurons, isoform APP695 being the predominant form. In astrocytes and microglial cells, almost 50% is L-isoform (appican).

The protein resides in the cell membrane. The protein localises to the membrane. It localises to the perikaryon. It is found in the cell projection. Its subcellular location is the growth cone. The protein resides in the clathrin-coated pit. The protein localises to the early endosome. It localises to the cytoplasmic vesicle. It is found in the endoplasmic reticulum. Its subcellular location is the golgi apparatus. The protein resides in the cell surface. The protein localises to the nucleus. It localises to the cytoplasm. It is found in the secreted. Its function is as follows. Functions as a cell surface receptor and performs physiological functions on the surface of neurons relevant to neurite growth, neuronal adhesion and axonogenesis. Interaction between APP molecules on neighboring cells promotes synaptogenesis. Involved in cell mobility and transcription regulation through protein-protein interactions. Can promote transcription activation through binding to APBB1-KAT5 and inhibit Notch signaling through interaction with Numb. Couples to apoptosis-inducing pathways such as those mediated by G(o) and JIP. Inhibits G(o)-alpha ATPase activity. Acts as a kinesin I membrane receptor, mediating the axonal transport of beta-secretase and presenilin 1. By acting as a kinesin I membrane receptor, plays a role in axonal anterograde transport of cargo towards synapses in axons. May be involved in copper homeostasis/oxidative stress through copper ion reduction. Can regulate neurite outgrowth through binding to components of the extracellular matrix such as heparin and collagen I and IV. The splice isoforms that contain the BPTI domain possess protease inhibitor activity. Induces a AGER-dependent pathway that involves activation of p38 MAPK, resulting in internalization of amyloid-beta peptide and leading to mitochondrial dysfunction in cultured mitochondrial dysfunction in cultured cortical neurons. Provides Cu(2+) ions for GPC1 which are required for release of nitric oxide (NO) and subsequent degradation of the heparan sulfate chains on GPC1. Functionally, amyloid-beta peptides are lipophilic metal chelators with metal-reducing activity. Binds transient metals such as copper, zinc and iron. Rat and mouse amyloid-beta peptides bind only weakly transient metals and have little reducing activity due to substitutions of transient metal chelating residues. Amyloid-beta protein 42 may activate mononuclear phagocytes in the brain and elicits inflammatory responses. Promotes both tau aggregation and TPK II-mediated phosphorylation. Also binds GPC1 in lipid rafts. In terms of biological role, appicans elicit adhesion of neural cells to the extracellular matrix and may regulate neurite outgrowth in the brain. The gamma-CTF peptides as well as the caspase-cleaved peptides, including C31, are potent enhancers of neuronal apoptosis. This Rattus norvegicus (Rat) protein is Amyloid-beta precursor protein.